The primary structure comprises 137 residues: Nucleoside diphosphate kinase (137 aa).

Residues lysine 9, phenylalanine 57, arginine 85, threonine 91, arginine 102, and asparagine 112 each contribute to the ATP site. Catalysis depends on histidine 115, which acts as the Pros-phosphohistidine intermediate.

It belongs to the NDK family. As to quaternary structure, homotetramer. It depends on Mg(2+) as a cofactor.

It localises to the cytoplasm. It catalyses the reaction a 2'-deoxyribonucleoside 5'-diphosphate + ATP = a 2'-deoxyribonucleoside 5'-triphosphate + ADP. It carries out the reaction a ribonucleoside 5'-diphosphate + ATP = a ribonucleoside 5'-triphosphate + ADP. Its function is as follows. Major role in the synthesis of nucleoside triphosphates other than ATP. The ATP gamma phosphate is transferred to the NDP beta phosphate via a ping-pong mechanism, using a phosphorylated active-site intermediate. The sequence is that of Nucleoside diphosphate kinase from Thermus thermophilus (strain ATCC BAA-163 / DSM 7039 / HB27).